The primary structure comprises 581 residues: Protein LYRIC (581 aa).

The Lumenal portion of the chain corresponds to Met-1–Ser-49. The interval Met-1 to Trp-71 is activation of NF-kappa-B. Residues Trp-50–Gly-70 traverse the membrane as a helical segment. Residues Trp-71–Thr-581 lie on the Cytoplasmic side of the membrane. An interaction with BCCIP region spans residues Ala-72 to Ser-168. Positions Gly-77–Pro-221 are disordered. Residues Glu-100–Arg-204 form an interaction with RELA region. Residues Leu-108–Lys-126 are compositionally biased toward basic and acidic residues. A Phosphothreonine modification is found at Thr-142. Basic residues predominate over residues Glu-159–Ser-168. A Phosphoserine modification is found at Ser-179. Over residues His-197–Asp-207 the composition is skewed to basic residues. Ser-215 and Ser-250 each carry phosphoserine. Lys-263 carries the post-translational modification N6-acetyllysine. The interval Val-280–Thr-581 is disordered. Ser-297, Ser-305, and Ser-310 each carry phosphoserine. Positions Gln-318–Asn-331 are enriched in polar residues. Phosphoserine is present on residues Ser-343 and Ser-368. Composition is skewed to polar residues over residues Glu-353 to Gln-371 and Asn-382 to Trp-393. Residues Gly-380–Lys-442 are lung-homing for mammary tumors. Residues Ser-414 and Ser-425 each carry the phosphoserine modification. Basic and acidic residues predominate over residues Asp-421–Glu-433. The segment covering Lys-440–Lys-450 has biased composition (basic residues). Ser-456, Ser-477, Ser-493, and Ser-495 each carry phosphoserine. 2 stretches are compositionally biased toward polar residues: residues Pro-519–Val-535 and Asn-548–Ser-567. Ser-567 carries the post-translational modification Phosphoserine. Positions Gln-570–Thr-581 are enriched in basic residues.

Interacts with BCCIP, CREBBP/CBP and RELA/p65. Widely expressed, with highest levels in liver, kidney, prostate and small intestine. Not detected in endothelial cells.

The protein localises to the endoplasmic reticulum membrane. It localises to the nucleus membrane. Its subcellular location is the cell junction. It is found in the tight junction. The protein resides in the nucleus. The protein localises to the nucleolus. It localises to the cytoplasm. Its subcellular location is the perinuclear region. Its function is as follows. Down-regulates SLC1A2/EAAT2 promoter activity when expressed ectopically. Activates the nuclear factor kappa-B (NF-kappa-B) transcription factor. Promotes anchorage-independent growth of immortalized melanocytes and astrocytes which is a key component in tumor cell expansion. Promotes lung metastasis and also has an effect on bone and brain metastasis, possibly by enhancing the seeding of tumor cells to the target organ endothelium. Induces chemoresistance. The sequence is that of Protein LYRIC (Mtdh) from Rattus norvegicus (Rat).